A 220-amino-acid polypeptide reads, in one-letter code: Thiamine-phosphate synthase (220 aa).

Residues 47-51 (QYREK) and Asn78 each bind 4-amino-2-methyl-5-(diphosphooxymethyl)pyrimidine. Residues Asp79 and Asp98 each contribute to the Mg(2+) site. Ser117 is a binding site for 4-amino-2-methyl-5-(diphosphooxymethyl)pyrimidine. 143 to 145 (TAT) lines the 2-[(2R,5Z)-2-carboxy-4-methylthiazol-5(2H)-ylidene]ethyl phosphate pocket. Lys146 serves as a coordination point for 4-amino-2-methyl-5-(diphosphooxymethyl)pyrimidine. 2-[(2R,5Z)-2-carboxy-4-methylthiazol-5(2H)-ylidene]ethyl phosphate contacts are provided by residues Gly174 and 194-195 (IS).

Belongs to the thiamine-phosphate synthase family. Mg(2+) is required as a cofactor.

It carries out the reaction 2-[(2R,5Z)-2-carboxy-4-methylthiazol-5(2H)-ylidene]ethyl phosphate + 4-amino-2-methyl-5-(diphosphooxymethyl)pyrimidine + 2 H(+) = thiamine phosphate + CO2 + diphosphate. It catalyses the reaction 2-(2-carboxy-4-methylthiazol-5-yl)ethyl phosphate + 4-amino-2-methyl-5-(diphosphooxymethyl)pyrimidine + 2 H(+) = thiamine phosphate + CO2 + diphosphate. The enzyme catalyses 4-methyl-5-(2-phosphooxyethyl)-thiazole + 4-amino-2-methyl-5-(diphosphooxymethyl)pyrimidine + H(+) = thiamine phosphate + diphosphate. Its pathway is cofactor biosynthesis; thiamine diphosphate biosynthesis; thiamine phosphate from 4-amino-2-methyl-5-diphosphomethylpyrimidine and 4-methyl-5-(2-phosphoethyl)-thiazole: step 1/1. Condenses 4-methyl-5-(beta-hydroxyethyl)thiazole monophosphate (THZ-P) and 2-methyl-4-amino-5-hydroxymethyl pyrimidine pyrophosphate (HMP-PP) to form thiamine monophosphate (TMP). This is Thiamine-phosphate synthase from Methanosarcina barkeri (strain Fusaro / DSM 804).